A 259-amino-acid chain; its full sequence is Large ribosomal subunit protein uL4 (259 aa).

Positions 47 to 67 (WGTDPMAGKRTTAESFGSGRG) are disordered.

It belongs to the universal ribosomal protein uL4 family. Part of the 50S ribosomal subunit.

In terms of biological role, one of the primary rRNA binding proteins, this protein initially binds near the 5'-end of the 23S rRNA. It is important during the early stages of 50S assembly. It makes multiple contacts with different domains of the 23S rRNA in the assembled 50S subunit and ribosome. Functionally, forms part of the polypeptide exit tunnel. The chain is Large ribosomal subunit protein uL4 from Methanosphaera stadtmanae (strain ATCC 43021 / DSM 3091 / JCM 11832 / MCB-3).